Here is a 122-residue protein sequence, read N- to C-terminus: Large ribosomal subunit protein uL14c (122 aa).

It belongs to the universal ribosomal protein uL14 family. Part of the 50S ribosomal subunit.

The protein resides in the plastid. It is found in the chloroplast. Binds to 23S rRNA. In Lotus japonicus (Lotus corniculatus var. japonicus), this protein is Large ribosomal subunit protein uL14c.